The following is a 239-amino-acid chain: Lactate utilization protein A (239 aa).

The protein belongs to the LutA/YkgE family.

In terms of biological role, is involved in L-lactate degradation and allows cells to grow with lactate as the sole carbon source. This chain is Lactate utilization protein A, found in Geobacillus kaustophilus (strain HTA426).